We begin with the raw amino-acid sequence, 553 residues long: Hydroxylamine reductase (553 aa).

4 residues coordinate [2Fe-2S] cluster: Cys-3, Cys-6, Cys-18, and Cys-25. Positions 252, 276, 320, 408, 436, 461, 495, and 497 each coordinate hybrid [4Fe-2O-2S] cluster. At Cys-408 the chain carries Cysteine persulfide.

The protein belongs to the HCP family. The cofactor is [2Fe-2S] cluster. It depends on hybrid [4Fe-2O-2S] cluster as a cofactor.

It is found in the cytoplasm. The enzyme catalyses A + NH4(+) + H2O = hydroxylamine + AH2 + H(+). In terms of biological role, catalyzes the reduction of hydroxylamine to form NH(3) and H(2)O. The chain is Hydroxylamine reductase from Tolumonas auensis (strain DSM 9187 / NBRC 110442 / TA 4).